We begin with the raw amino-acid sequence, 609 residues long: Nuclear factor 7, brain (609 aa).

One can recognise a Tudor-knot domain in the interval 21–75; that stretch reads NVGSTYPCKRSDGSQHDAEIVKVRYNKQAGREEYYAHYVGLNRRQNEWVDKSRLV. Basic and acidic residues predominate over residues 74–84; the sequence is LVLTKPPKEGE. A disordered region spans residues 74–129; sequence LVLTKPPKEGETNGTDQEVTDTAEQPDSKTPQKRKIEEPEPEPKKAKVEEKDASKN. The span at 85–102 shows a compositional bias: polar residues; it reads TNGTDQEVTDTAEQPDSK. Threonine 103 is subject to Phosphothreonine; by CDK1. A compositionally biased stretch (basic and acidic residues) spans 107 to 127; sequence RKIEEPEPEPKKAKVEEKDAS. Residues 145–185 form an RING-type zinc finger; that stretch reads CPLCVELFKDPVMVACGHNFCRSCIDKAWEGQSSFACPECR. The B box-type zinc finger occupies 219–260; that stretch reads RPLEKCSEHDERLKLYCKDDGTLSCVICRDSLKHASHNFLPI. 4 residues coordinate Zn(2+): cysteine 224, histidine 227, cysteine 246, and histidine 252. The stretch at 278-371 forms a coiled coil; sequence LEASLKVTEQ…SLAKERMEDT (94 aa). A B30.2/SPRY domain is found at 413 to 609; sequence GPIQYIMWKE…VDPLRFVHNK (197 aa).

As to quaternary structure, monomer. Post-translationally, threonine (predominantly) and serine residues are phosphorylated during oocyte maturation, when CDK1 is active. At the neurula stage, high expression in dorsal embryo region including neural folds and somites. Also high expression in adult brain (CNS) and low expression in oocytes.

It localises to the nucleus. In terms of biological role, transcription factor that determines dorsal-ventral body axis. This is Nuclear factor 7, brain from Xenopus laevis (African clawed frog).